Here is a 397-residue protein sequence, read N- to C-terminus: Acetate kinase 1 (397 aa).

Position 8 (N8) interacts with Mg(2+). Residue K15 coordinates ATP. A substrate-binding site is contributed by R89. The active-site Proton donor/acceptor is D146. Residues 206–210 (HLGNG), 281–283 (DLR), and 329–333 (GIGEN) contribute to the ATP site. E382 provides a ligand contact to Mg(2+).

This sequence belongs to the acetokinase family. As to quaternary structure, homodimer. It depends on Mg(2+) as a cofactor. Mn(2+) serves as cofactor.

It is found in the cytoplasm. The enzyme catalyses acetate + ATP = acetyl phosphate + ADP. The protein operates within metabolic intermediate biosynthesis; acetyl-CoA biosynthesis; acetyl-CoA from acetate: step 1/2. Catalyzes the formation of acetyl phosphate from acetate and ATP. Can also catalyze the reverse reaction. In Listeria monocytogenes serovar 1/2a (strain ATCC BAA-679 / EGD-e), this protein is Acetate kinase 1.